The following is a 911-amino-acid chain: Valine--tRNA ligase (911 aa).

Positions 57 to 67 match the 'HIGH' region motif; it reads PTVSGSLHVGH. The 'KMSKS' region signature appears at 599-603; that stretch reads KMSKS. Residue K602 participates in ATP binding. Positions 882–911 are disordered; sequence EESAAEDAPETEVAVEASELGEPPAKKPKH.

It belongs to the class-I aminoacyl-tRNA synthetase family. ValS type 2 subfamily. Monomer.

Its subcellular location is the cytoplasm. The enzyme catalyses tRNA(Val) + L-valine + ATP = L-valyl-tRNA(Val) + AMP + diphosphate. In terms of biological role, catalyzes the attachment of valine to tRNA(Val). As ValRS can inadvertently accommodate and process structurally similar amino acids such as threonine, to avoid such errors, it has a 'posttransfer' editing activity that hydrolyzes mischarged Thr-tRNA(Val) in a tRNA-dependent manner. The polypeptide is Valine--tRNA ligase (Bifidobacterium longum (strain DJO10A)).